The primary structure comprises 100 residues: Apolipoprotein C-II (100 aa).

An N-terminal signal peptide occupies residues 1-22 (MDSRFLLALFLVLLVLGCEVQA). The interval 66–74 (SVDEKLRDM) is lipid binding. A lipoprotein lipase cofactor region spans residues 78 to 100 (SSAAMTTYAIIFTDQILTLLKGE).

Belongs to the apolipoprotein C2 family. Proapolipoprotein C-II is synthesized as a sialic acid containing glycoprotein which is subsequently desialylated prior to its proteolytic processing. Post-translationally, proapolipoprotein C-II, the major form found in plasma undergoes proteolytic cleavage of its N-terminal hexapeptide to generate the mature form apolipoprotein C-II, which occurs as the minor form in plasma.

The protein resides in the secreted. Component of chylomicrons, very low-density lipoproteins (VLDL), low-density lipoproteins (LDL), and high-density lipoproteins (HDL) in plasma. Plays an important role in lipoprotein metabolism as an activator of lipoprotein lipase. The protein is Apolipoprotein C-II (APOC2) of Myodes glareolus (Bank vole).